We begin with the raw amino-acid sequence, 675 residues long: DNA ligase (675 aa).

NAD(+) is bound by residues 33–37 (DAEYD), 82–83 (SL), and Glu-115. Lys-117 acts as the N6-AMP-lysine intermediate in catalysis. Arg-138, Glu-175, Lys-293, and Lys-317 together coordinate NAD(+). The Zn(2+) site is built by Cys-411, Cys-414, Cys-429, and Cys-435. The BRCT domain occupies 594-675 (IADNPLKDKT…LIGYFTTIVS (82 aa)).

This sequence belongs to the NAD-dependent DNA ligase family. LigA subfamily. Mg(2+) serves as cofactor. It depends on Mn(2+) as a cofactor.

It carries out the reaction NAD(+) + (deoxyribonucleotide)n-3'-hydroxyl + 5'-phospho-(deoxyribonucleotide)m = (deoxyribonucleotide)n+m + AMP + beta-nicotinamide D-nucleotide.. Functionally, DNA ligase that catalyzes the formation of phosphodiester linkages between 5'-phosphoryl and 3'-hydroxyl groups in double-stranded DNA using NAD as a coenzyme and as the energy source for the reaction. It is essential for DNA replication and repair of damaged DNA. The polypeptide is DNA ligase (Glaesserella parasuis serovar 5 (strain SH0165) (Haemophilus parasuis)).